A 553-amino-acid polypeptide reads, in one-letter code: Methionine--tRNA ligase (553 aa).

Residues 12–22 (PYANSQLHLGH) carry the 'HIGH' region motif. Zn(2+)-binding residues include C144, C147, C157, and C160. The short motif at 332-336 (KFSKS) is the 'KMSKS' region element. K335 contributes to the ATP binding site.

It belongs to the class-I aminoacyl-tRNA synthetase family. MetG type 1 subfamily. As to quaternary structure, monomer. It depends on Zn(2+) as a cofactor.

It localises to the cytoplasm. It catalyses the reaction tRNA(Met) + L-methionine + ATP = L-methionyl-tRNA(Met) + AMP + diphosphate. In terms of biological role, is required not only for elongation of protein synthesis but also for the initiation of all mRNA translation through initiator tRNA(fMet) aminoacylation. In Dehalococcoides mccartyi (strain CBDB1), this protein is Methionine--tRNA ligase.